Reading from the N-terminus, the 120-residue chain is Large ribosomal subunit protein uL18 (120 aa).

This sequence belongs to the universal ribosomal protein uL18 family. As to quaternary structure, part of the 50S ribosomal subunit; part of the 5S rRNA/L5/L18/L25 subcomplex. Contacts the 5S and 23S rRNAs.

In terms of biological role, this is one of the proteins that bind and probably mediate the attachment of the 5S RNA into the large ribosomal subunit, where it forms part of the central protuberance. This is Large ribosomal subunit protein uL18 from Ehrlichia ruminantium (strain Gardel).